Here is a 384-residue protein sequence, read N- to C-terminus: PqqA peptide cyclase (384 aa).

The region spanning 14–230 (IPAPVGLLAE…EAARERLKGQ (217 aa)) is the Radical SAM core domain. [4Fe-4S] cluster-binding residues include cysteine 28, cysteine 32, and cysteine 35.

Belongs to the radical SAM superfamily. PqqE family. As to quaternary structure, interacts with PqqD. The interaction is necessary for activity of PqqE. The cofactor is [4Fe-4S] cluster.

The catalysed reaction is [PQQ precursor protein] + S-adenosyl-L-methionine = E-Y cross-linked-[PQQ precursor protein] + 5'-deoxyadenosine + L-methionine + H(+). It functions in the pathway cofactor biosynthesis; pyrroloquinoline quinone biosynthesis. Catalyzes the cross-linking of a glutamate residue and a tyrosine residue in the PqqA protein as part of the biosynthesis of pyrroloquinoline quinone (PQQ). The polypeptide is PqqA peptide cyclase (Methylorubrum extorquens (strain CM4 / NCIMB 13688) (Methylobacterium extorquens)).